The sequence spans 208 residues: MNRKSIAKGKLVRRFGVNIFEQPKYDKLLKKKPNPPGMHGRSRRTKVTEYGKQLIEKQKVKFTYGVSERQLTNVFKEARRQHGVTGDNLLALLERRIDNIVYRAGFAISRAHARQIVSHGIIILNGRRVTIPSITLRANDIIQVKEKDSLKKLVRSNIEKTSTLRKLPDWIEVNADALNVKIIRTPSRDEIPTLANEQMIVEYYSKRA.

The S4 RNA-binding domain maps to 95-157 (RRIDNIVYRA…DSLKKLVRSN (63 aa)).

It belongs to the universal ribosomal protein uS4 family. As to quaternary structure, part of the 30S ribosomal subunit. Contacts protein S5. The interaction surface between S4 and S5 is involved in control of translational fidelity.

Functionally, one of the primary rRNA binding proteins, it binds directly to 16S rRNA where it nucleates assembly of the body of the 30S subunit. Its function is as follows. With S5 and S12 plays an important role in translational accuracy. The protein is Small ribosomal subunit protein uS4 of Borrelia duttonii (strain Ly).